Here is a 280-residue protein sequence, read N- to C-terminus: Nitrogenase iron protein (280 aa).

ATP is bound at residue 8-15; sequence GKGGIGKS. Cys95 serves as a coordination point for [4Fe-4S] cluster. Arg98 is modified (ADP-ribosylarginine; by dinitrogenase reductase ADP-ribosyltransferase). Residue Cys128 participates in [4Fe-4S] cluster binding.

The protein belongs to the NifH/BchL/ChlL family. As to quaternary structure, homodimer. [4Fe-4S] cluster is required as a cofactor. The reversible ADP-ribosylation of Arg-98 inactivates the nitrogenase reductase and regulates nitrogenase activity.

The enzyme catalyses N2 + 8 reduced [2Fe-2S]-[ferredoxin] + 16 ATP + 16 H2O = H2 + 8 oxidized [2Fe-2S]-[ferredoxin] + 2 NH4(+) + 16 ADP + 16 phosphate + 6 H(+). Its function is as follows. The key enzymatic reactions in nitrogen fixation are catalyzed by the nitrogenase complex, which has 2 components: the iron protein and the molybdenum-iron protein. This Methanospirillum hungatei JF-1 (strain ATCC 27890 / DSM 864 / NBRC 100397 / JF-1) protein is Nitrogenase iron protein.